The following is a 634-amino-acid chain: Nucleoside triphosphatase I (634 aa).

One can recognise a Helicase ATP-binding domain in the interval 41–203 (FLGLDSMNSL…ALLVNLLRPG (163 aa)). 54 to 61 (QETGVGKT) provides a ligand contact to ATP. A DEXH box motif is present at residues 140–143 (DECH). The 177-residue stretch at 355 to 531 (SLYQALYEHS…EFSQLYRVLK (177 aa)) folds into the Helicase C-terminal domain. Positions 456–523 (DIFILDMTWN…EIIQNKAREF (68 aa)) are binding to the cap-specific mRNA (nucleoside-2'-O-)-methyltransferase.

It belongs to the helicase family. NPH I subfamily. As to quaternary structure, monomer. Interacts (via C-terminus) with RAP94 (via N-terminus). Interacts with the cap-specific mRNA (nucleoside-2'-O-)-methyltransferase.

It localises to the virion. The catalysed reaction is a ribonucleoside 5'-triphosphate + H2O = a ribonucleoside 5'-diphosphate + phosphate + H(+). Its function is as follows. DNA-dependent ATPase required for providing the needed energy to achieve the termination of early transcripts. Acts in concert with the RAP94 subunit of the virion RNA polymerase and the capping enzyme/VTF to catalyze release of UUUUUNU-containing nascent RNA from the elongation complex. NPH-I must bind ssDNA in order to exhibit ATPase activity. This is Nucleoside triphosphatase I (NPH1) from Homo sapiens (Human).